The sequence spans 375 residues: Succinyl-diaminopimelate desuccinylase (375 aa).

Position 66 (histidine 66) interacts with Zn(2+). The active site involves aspartate 68. Aspartate 99 serves as a coordination point for Zn(2+). Glutamate 133 serves as the catalytic Proton acceptor. Residues glutamate 134, glutamate 162, and histidine 348 each coordinate Zn(2+).

It belongs to the peptidase M20A family. DapE subfamily. As to quaternary structure, homodimer. It depends on Zn(2+) as a cofactor. The cofactor is Co(2+).

It catalyses the reaction N-succinyl-(2S,6S)-2,6-diaminopimelate + H2O = (2S,6S)-2,6-diaminopimelate + succinate. The protein operates within amino-acid biosynthesis; L-lysine biosynthesis via DAP pathway; LL-2,6-diaminopimelate from (S)-tetrahydrodipicolinate (succinylase route): step 3/3. Its function is as follows. Catalyzes the hydrolysis of N-succinyl-L,L-diaminopimelic acid (SDAP), forming succinate and LL-2,6-diaminopimelate (DAP), an intermediate involved in the bacterial biosynthesis of lysine and meso-diaminopimelic acid, an essential component of bacterial cell walls. The protein is Succinyl-diaminopimelate desuccinylase of Shigella sonnei (strain Ss046).